Reading from the N-terminus, the 67-residue chain is Large ribosomal subunit protein bL35 (67 aa).

This sequence belongs to the bacterial ribosomal protein bL35 family.

The sequence is that of Large ribosomal subunit protein bL35 from Anaeromyxobacter sp. (strain Fw109-5).